The primary structure comprises 374 residues: tRNA N6-adenosine threonylcarbamoyltransferase (374 aa).

Residues His-117 and His-121 each coordinate Fe cation. Substrate contacts are provided by residues 140–144 (LVSGG), Asp-174, Gly-187, Asp-191, and Asn-283. Asp-311 serves as a coordination point for Fe cation. Low complexity predominate over residues 337–352 (ADSSLPVTEPHVPGQG). A disordered region spans residues 337-374 (ADSSLPVTEPHVPGQGHPHGHPHGHDHVHEVSKENLYS). The segment covering 359–374 (HGHDHVHEVSKENLYS) has biased composition (basic and acidic residues).

This sequence belongs to the KAE1 / TsaD family. Requires Fe(2+) as cofactor.

It localises to the cytoplasm. The catalysed reaction is L-threonylcarbamoyladenylate + adenosine(37) in tRNA = N(6)-L-threonylcarbamoyladenosine(37) in tRNA + AMP + H(+). Required for the formation of a threonylcarbamoyl group on adenosine at position 37 (t(6)A37) in tRNAs that read codons beginning with adenine. Is involved in the transfer of the threonylcarbamoyl moiety of threonylcarbamoyl-AMP (TC-AMP) to the N6 group of A37, together with TsaE and TsaB. TsaD likely plays a direct catalytic role in this reaction. This Streptomyces coelicolor (strain ATCC BAA-471 / A3(2) / M145) protein is tRNA N6-adenosine threonylcarbamoyltransferase.